We begin with the raw amino-acid sequence, 427 residues long: Tol-Pal system protein TolB (427 aa).

The N-terminal stretch at 1-23 (MKLLKRLVSVFAIVLAVGSNAFA) is a signal peptide.

Belongs to the TolB family. In terms of assembly, the Tol-Pal system is composed of five core proteins: the inner membrane proteins TolA, TolQ and TolR, the periplasmic protein TolB and the outer membrane protein Pal. They form a network linking the inner and outer membranes and the peptidoglycan layer.

The protein resides in the periplasm. Functionally, part of the Tol-Pal system, which plays a role in outer membrane invagination during cell division and is important for maintaining outer membrane integrity. The polypeptide is Tol-Pal system protein TolB (Haemophilus influenzae (strain PittEE)).